A 135-amino-acid polypeptide reads, in one-letter code: D-ribose pyranase (135 aa).

The active-site Proton donor is H20. Residues D28, H102, and 124 to 126 (YSN) each bind substrate.

This sequence belongs to the RbsD / FucU family. RbsD subfamily. In terms of assembly, homodecamer.

It is found in the cytoplasm. It carries out the reaction beta-D-ribopyranose = beta-D-ribofuranose. It participates in carbohydrate metabolism; D-ribose degradation; D-ribose 5-phosphate from beta-D-ribopyranose: step 1/2. Its function is as follows. Catalyzes the interconversion of beta-pyran and beta-furan forms of D-ribose. The protein is D-ribose pyranase of Thermotoga maritima (strain ATCC 43589 / DSM 3109 / JCM 10099 / NBRC 100826 / MSB8).